Here is a 196-residue protein sequence, read N- to C-terminus: Purpurin (196 aa).

The first 21 residues, 1 to 21 (MKYAQYVFLASIFSAVEYSLA), serve as a signal peptide directing secretion. 3 cysteine pairs are disulfide-bonded: C24–C182, C90–C196, and C142–C151.

This sequence belongs to the calycin superfamily. Lipocalin family.

The protein resides in the secreted. It is found in the extracellular space. The protein localises to the extracellular matrix. It localises to the interphotoreceptor matrix. In terms of biological role, may be involved in the transport of retinol between the photoreceptors and the pigmented epithelium. In Gallus gallus (Chicken), this protein is Purpurin.